Consider the following 151-residue polypeptide: Cyanate hydratase (151 aa).

Catalysis depends on residues R92, E95, and S118.

This sequence belongs to the cyanase family.

The enzyme catalyses cyanate + hydrogencarbonate + 3 H(+) = NH4(+) + 2 CO2. Its function is as follows. Catalyzes the reaction of cyanate with bicarbonate to produce ammonia and carbon dioxide. The protein is Cyanate hydratase of Coprinopsis cinerea (strain Okayama-7 / 130 / ATCC MYA-4618 / FGSC 9003) (Inky cap fungus).